The sequence spans 267 residues: tRNA pseudouridine synthase A (267 aa).

The Nucleophile role is filled by Asp51. Residue Tyr109 coordinates substrate.

This sequence belongs to the tRNA pseudouridine synthase TruA family. As to quaternary structure, homodimer.

It catalyses the reaction uridine(38/39/40) in tRNA = pseudouridine(38/39/40) in tRNA. Its function is as follows. Formation of pseudouridine at positions 38, 39 and 40 in the anticodon stem and loop of transfer RNAs. In Staphylococcus aureus (strain MSSA476), this protein is tRNA pseudouridine synthase A.